The following is an 85-amino-acid chain: UPF0512 protein R (85 aa).

It belongs to the UPF0512 family.

The sequence is that of UPF0512 protein R from Dictyostelium discoideum (Social amoeba).